Consider the following 533-residue polypeptide: Probable lipid II flippase MurJ (533 aa).

14 helical membrane-spanning segments follow: residues 11–31, 39–61, 96–116, 135–155, 166–186, 196–216, 253–273, 284–304, 330–350, 360–380, 400–420, 422–442, 452–472, and 493–513; these read LANI…FGLL, AFGV…FLFI, LVSG…GIFI, LQIM…FGTL, ISPL…VWQL, WLLG…LQWL, LSSG…SFIP, FVAL…FLPV, LTMF…VQVI, AAAE…FYLG, VSLF…KPFG, VGIV…FIWM, LGGW…ASVA, and ILEV…GVAL.

It belongs to the MurJ/MviN family.

It localises to the cell inner membrane. The protein operates within cell wall biogenesis; peptidoglycan biosynthesis. Functionally, involved in peptidoglycan biosynthesis. Transports lipid-linked peptidoglycan precursors from the inner to the outer leaflet of the cytoplasmic membrane. In Synechocystis sp. (strain ATCC 27184 / PCC 6803 / Kazusa), this protein is Probable lipid II flippase MurJ.